A 342-amino-acid polypeptide reads, in one-letter code: Galactose mutarotase (342 aa).

S14 is subject to Phosphoserine. Residues 81–82 (NR) and H107 contribute to the beta-D-galactose site. S124 bears the Phosphoserine mark. The active-site Proton donor is the H176. Residues 176–178 (HSY), D243, Q279, and E307 contribute to the beta-D-galactose site. Residue E307 is the Proton acceptor of the active site.

This sequence belongs to the aldose epimerase family. As to quaternary structure, monomer.

The protein resides in the cytoplasm. It carries out the reaction alpha-D-galactose = beta-D-galactose. The enzyme catalyses alpha-D-glucose = beta-D-glucose. Its pathway is carbohydrate metabolism; hexose metabolism. It functions in the pathway carbohydrate metabolism; galactose metabolism. Mutarotase that catalyzes the interconversion of beta-D-galactose and alpha-D-galactose during galactose metabolism. Beta-D-galactose is metabolized in the liver into glucose 1-phosphate, the primary metabolic fuel, by the action of four enzymes that constitute the Leloir pathway: GALM, GALK1 (galactokinase), GALT (galactose-1-phosphate uridylyltransferase) and GALE (UDP-galactose-4'-epimerase). Involved in the maintenance of the equilibrium between the beta- and alpha-anomers of galactose, therefore ensuring a sufficient supply of the alpha-anomer for GALK1. Also active on D-glucose although shows a preference for galactose over glucose. The polypeptide is Galactose mutarotase (Galm) (Rattus norvegicus (Rat)).